A 190-amino-acid chain; its full sequence is uncharacterized protein (190 aa).

The signal sequence occupies residues 1–15; the sequence is MKVFAYIALATVVAG.

The protein localises to the secreted. This is an uncharacterized protein from Arthroderma benhamiae (strain ATCC MYA-4681 / CBS 112371) (Trichophyton mentagrophytes).